We begin with the raw amino-acid sequence, 545 residues long: POTE ankyrin domain family member H (545 aa).

7 ANK repeats span residues 180-208 (LHRA…KKDK), 209-238 (QKRT…QLNI), 242-271 (KKRT…DPNI), 275-304 (YGNT…DIES), 308-337 (HGLT…NLNA), 341-370 (YGRT…DVSS), and 374-404 (SGQT…QILK). The disordered stretch occupies residues 406–524 (SSENSNPEQD…KQLSEEQNTG (119 aa)). 2 stretches are compositionally biased toward basic and acidic residues: residues 414-429 (QDLK…RLKG) and 443-458 (EINK…EMKK). The span at 513 to 524 (TQKQLSEEQNTG) shows a compositional bias: polar residues.

Belongs to the POTE family.

This is POTE ankyrin domain family member H (POTEH) from Homo sapiens (Human).